We begin with the raw amino-acid sequence, 151 residues long: UPF0735 ACT domain-containing protein SERP1207 (151 aa).

The 76-residue stretch at 74 to 149 folds into the ACT domain; it reads TLILYVNDIV…HVTKVDLISM (76 aa).

The protein belongs to the UPF0735 family.

The polypeptide is UPF0735 ACT domain-containing protein SERP1207 (Staphylococcus epidermidis (strain ATCC 35984 / DSM 28319 / BCRC 17069 / CCUG 31568 / BM 3577 / RP62A)).